The sequence spans 313 residues: Putative HTH-type transcriptional regulatory protein Msm_0453 (313 aa).

An HTH cro/C1-type domain is found at 131–189 (IKQYREEYSLSLKDLADLAHVSRATMYKYENEIVRANTETAMILEEILNTKVTLDIDLL). A DNA-binding region (H-T-H motif) is located at residues 142–161 (LKDLADLAHVSRATMYKYEN).

This is Putative HTH-type transcriptional regulatory protein Msm_0453 from Methanobrevibacter smithii (strain ATCC 35061 / DSM 861 / OCM 144 / PS).